A 517-amino-acid polypeptide reads, in one-letter code: Probable anion transporter 6, chloroplastic (517 aa).

Residues Thr-51–Leu-73 form a disordered region. Positions Glu-52–Lys-70 are enriched in basic and acidic residues. The next 10 helical transmembrane spans lie at Phe-130–Leu-150, Ile-170–Pro-190, Phe-229–Ile-249, Glu-255–Leu-275, Ser-312–Gly-332, Leu-352–Leu-372, Ile-397–Pro-417, Ile-420–Cys-440, Ile-452–Thr-472, and Met-484–Phe-504.

It belongs to the major facilitator superfamily. Sodium/anion cotransporter (TC 2.A.1.14) family. As to expression, expressed in leaf veins and sepals.

The protein localises to the plastid. The protein resides in the chloroplast membrane. Its function is as follows. Inorganic phosphate and probable anion transporter. The polypeptide is Probable anion transporter 6, chloroplastic (ANTR6) (Arabidopsis thaliana (Mouse-ear cress)).